The chain runs to 1280 residues: Pullulanase A (1280 aa).

The first 44 residues, 1–44, serve as a signal peptide directing secretion; the sequence is MRKTPSHTEKKMVYSIRSLKNGTGSVLIGASLVLLAMATPTISS. The interval 42–132 is disordered; it reads ISSDESTPTT…VTTETKAEEP (91 aa). Low complexity predominate over residues 48–61; it reads TPTTNEPNNRNTTT. Positions 79–90 are enriched in polar residues; it reads DISSPGNANASL. Over residues 115–126 the composition is skewed to low complexity; it reads EPTTSTSPVTTE. Substrate is bound by residues 156–158, tryptophan 168, aspartate 214, 263–265, tryptophan 276, lysine 318, and asparagine 323; these read WTW and WYW. 2 residues coordinate Ca(2+): serine 661 and tyrosine 663. Residues 667–668 and phenylalanine 743 each bind substrate; that span reads YD. Aspartate 778 acts as the Nucleophile in catalysis. The active-site Proton donor is the glutamate 807. Residue tryptophan 809 participates in substrate binding. Residues methionine 828, threonine 831, and aspartate 832 each contribute to the Ca(2+) site. Positions 839, 842, and 849 each coordinate substrate. 2 residues coordinate Ca(2+): aspartate 882 and aspartate 886. Substrate is bound by residues asparagine 896, lysine 969, and 989 to 991; that span reads DSY. Aspartate 992 contributes to the Ca(2+) binding site. A disordered region spans residues 1140-1248; the sequence is VSQNGTSHES…TPDKQAELPN (109 aa). Basic and acidic residues predominate over residues 1149–1196; it reads STAEEKPDSTPSKPEHQNEASHPAHQDPAPEARPDSTKPDAKVADAEN. Residues 1205-1218 are compositionally biased toward low complexity; the sequence is SQAEQPAQEAQASS. The short motif at 1246–1250 is the LPXTG sorting signal element; sequence LPNTG. Threonine 1249 carries the post-translational modification Pentaglycyl murein peptidoglycan amidated threonine. A propeptide spans 1250-1280 (removed by sortase); it reads GIKNENKLLFAGISLLALLGLGFLLKNKKEN.

The protein belongs to the glycosyl hydrolase 13 family.

Its subcellular location is the secreted. It localises to the cell wall. The protein resides in the cell surface. It carries out the reaction Hydrolysis of (1-&gt;6)-alpha-D-glucosidic linkages in pullulan, amylopectin and glycogen, and in the alpha- and beta-limit dextrins of amylopectin and glycogen.. Its activity is regulated as follows. Inhibited by 4-O-alpha-D-glucopyranosylmoranoline (G1M). Virulence factor. Involved in the degradation of glycogen of the mammalian host cells. Hydrolyzes the alpha-1,6-branchpoints of glycogen. Hydrolyzes pullulan. Does not hydrolyze dextran. Binds to mouse lung alveolar type II cells that are rich in glycogen stores. Is an alpha-glucan-specific carbohydrate-binding protein, which binds to amylose (pure alpha-(1,4)-linked glucose), amylopectin (alpha-(1,4)-linked glucose with alpha-(1,6) branch points), pullulan (linear polymer of mixed alpha-(1,4)- and alpha-(1,6)-linked glucose) and glycogen (similar to amylopectin with more frequent alpha-(1,6) branch points) in vitro. Does not bind to dextran (a linear polymer of alpha-(1,6)-linked glucose). This chain is Pullulanase A, found in Streptococcus pneumoniae serotype 4 (strain ATCC BAA-334 / TIGR4).